Reading from the N-terminus, the 249-residue chain is 15,16-dihydrobiliverdin:ferredoxin oxidoreductase (249 aa).

Belongs to the HY2 family.

It carries out the reaction 15,16-dihydrobiliverdin + oxidized 2[4Fe-4S]-[ferredoxin] = biliverdin IXalpha + reduced 2[4Fe-4S]-[ferredoxin] + 2 H(+). Catalyzes the two-electron reduction of biliverdin IX-alpha at the C15 methine bridge. The chain is 15,16-dihydrobiliverdin:ferredoxin oxidoreductase from Prochlorococcus marinus (strain MIT 9303).